Consider the following 572-residue polypeptide: Isocitrate lyase (572 aa).

Substrate is bound at residue 104-106 (SGW). D175 is a binding site for Mg(2+). The Proton acceptor role is filled by C213. Residues 214 to 215 (GH), R250, 437 to 441 (NLSPS), and T472 contribute to the substrate site. Positions 550-572 (QFKGSWTGPGSESSSHVLAKSRM) are disordered. The short motif at 570–572 (SRM) is the Microbody targeting signal element.

This sequence belongs to the isocitrate lyase/PEP mutase superfamily. Isocitrate lyase family. The cofactor is Mg(2+). Expressed in leaves.

Its subcellular location is the glyoxysome. It catalyses the reaction D-threo-isocitrate = glyoxylate + succinate. The protein operates within carbohydrate metabolism; glyoxylate cycle; (S)-malate from isocitrate: step 1/2. Involved in storage lipid mobilization during the growth of higher plant seedling. This Oryza sativa subsp. japonica (Rice) protein is Isocitrate lyase.